A 353-amino-acid chain; its full sequence is Carbamoyl phosphate synthase arginine-specific small chain (353 aa).

A CPSase region spans residues 1-162 (MEGYLVLEDG…EISTFGDGNK (162 aa)). L-glutamine-binding residues include S44, G210, and G212. Positions 163 to 349 (HIALIDFGYK…LKNVIPARRE (187 aa)) constitute a Glutamine amidotransferase type-1 domain. The Nucleophile role is filled by C237. Residues L238, Q241, N279, and Y282 each contribute to the L-glutamine site. Active-site residues include H322 and E324.

It belongs to the CarA family. As to quaternary structure, composed of two chains; the small (or glutamine) chain promotes the hydrolysis of glutamine to ammonia, which is used by the large (or ammonia) chain to synthesize carbamoyl phosphate. Tetramer of heterodimers (alpha,beta)4.

The catalysed reaction is hydrogencarbonate + L-glutamine + 2 ATP + H2O = carbamoyl phosphate + L-glutamate + 2 ADP + phosphate + 2 H(+). The enzyme catalyses L-glutamine + H2O = L-glutamate + NH4(+). Its pathway is amino-acid biosynthesis; L-arginine biosynthesis; carbamoyl phosphate from bicarbonate: step 1/1. In terms of biological role, small subunit of the glutamine-dependent carbamoyl phosphate synthetase (CPSase). CPSase catalyzes the formation of carbamoyl phosphate from the ammonia moiety of glutamine, carbonate, and phosphate donated by ATP, constituting the first step of the biosynthetic pathway leading to arginine and/or urea. The small subunit (glutamine amidotransferase) binds and cleaves glutamine to supply the large subunit with the substrate ammonia. This Bacillus subtilis (strain 168) protein is Carbamoyl phosphate synthase arginine-specific small chain.